The sequence spans 323 residues: Lipoyl synthase (323 aa).

[4Fe-4S] cluster is bound by residues Cys61, Cys66, Cys72, Cys87, Cys91, Cys94, and Ser300. The Radical SAM core domain maps to 73-289; that stretch reads WDKKHATFMI…ETVAYSKGFL (217 aa).

The protein belongs to the radical SAM superfamily. Lipoyl synthase family. The cofactor is [4Fe-4S] cluster.

Its subcellular location is the cytoplasm. The enzyme catalyses [[Fe-S] cluster scaffold protein carrying a second [4Fe-4S](2+) cluster] + N(6)-octanoyl-L-lysyl-[protein] + 2 oxidized [2Fe-2S]-[ferredoxin] + 2 S-adenosyl-L-methionine + 4 H(+) = [[Fe-S] cluster scaffold protein] + N(6)-[(R)-dihydrolipoyl]-L-lysyl-[protein] + 4 Fe(3+) + 2 hydrogen sulfide + 2 5'-deoxyadenosine + 2 L-methionine + 2 reduced [2Fe-2S]-[ferredoxin]. It participates in protein modification; protein lipoylation via endogenous pathway; protein N(6)-(lipoyl)lysine from octanoyl-[acyl-carrier-protein]: step 2/2. Catalyzes the radical-mediated insertion of two sulfur atoms into the C-6 and C-8 positions of the octanoyl moiety bound to the lipoyl domains of lipoate-dependent enzymes, thereby converting the octanoylated domains into lipoylated derivatives. In Rhizobium etli (strain ATCC 51251 / DSM 11541 / JCM 21823 / NBRC 15573 / CFN 42), this protein is Lipoyl synthase.